The sequence spans 216 residues: MGQKINPLGFRLGTTQSHDSIWFAQPTKYSENIQEDKKIRDWIKNYIQKNIRISSGVEGIGEIKIQKRIDLIQVIIYMGFPKLLIEGKPHKIEEFQTNMHKKLNCVNKKLNIAIVKITNAYKHPNILAEFIAGQLKNRVSFRKAMKKAIELTEQAGTKGVQVQIAGRIDGKEIARVEWIREGRVPLQTIRAKIEYCCYTVRTIYGILGIKVWIFSK.

Residues 43–118 enclose the KH type-2 domain; the sequence is IKNYIQKNIR…KLNIAIVKIT (76 aa).

This sequence belongs to the universal ribosomal protein uS3 family. In terms of assembly, part of the 30S ribosomal subunit.

The protein localises to the plastid. The protein resides in the chloroplast. The polypeptide is Small ribosomal subunit protein uS3c (rps3) (Phaseolus vulgaris (Kidney bean)).